A 104-amino-acid chain; its full sequence is Large ribosomal subunit protein bL21 (104 aa).

Belongs to the bacterial ribosomal protein bL21 family. Part of the 50S ribosomal subunit. Contacts protein L20.

Functionally, this protein binds to 23S rRNA in the presence of protein L20. The sequence is that of Large ribosomal subunit protein bL21 from Azobacteroides pseudotrichonymphae genomovar. CFP2.